The sequence spans 444 residues: MSKKYYFIGIKGTGMGPLAQILHDQGNEVLGSDIDTYTYTQAPLEAAGIKILTFDARNIDANQDAIFVRGNAFNNDQIEVARALEIGVTMVSYPEAVQEQISQTTSIAVAGAHGKTSTTGLLAHVLKNIAPTSYLIGDGTGRGVPNSQFFVVEADEYRRHFKDYAPDYAILTNIDFDHPDYYTGIEDVTSAFADFANNVKKAIFAWGDDEHLRSLKPSADVYYYGVNPERDDFVATNIHKSTQGSHFDVVFRGKDLGEFAVPLFGQHGILNALAVIAVSYMEEVDLDLIRQYLLTYQGVKRRFSEKQIADITVIDDYAHHPTEITATLDAARQKYPNKKIIAIFQPHTFSRVIAYKDEFASSLEAADQVYLANIFGSAREQAGTITSKDLGSEISKFGGIIEENDMSLLMPYENAVMVFMGAGDIEKYEFAYEKLLGQLRTDLT.

ATP is bound at residue 111 to 117; that stretch reads GAHGKTS.

The protein belongs to the MurCDEF family.

The protein localises to the cytoplasm. It catalyses the reaction UDP-N-acetyl-alpha-D-muramate + L-alanine + ATP = UDP-N-acetyl-alpha-D-muramoyl-L-alanine + ADP + phosphate + H(+). The protein operates within cell wall biogenesis; peptidoglycan biosynthesis. Cell wall formation. The chain is UDP-N-acetylmuramate--L-alanine ligase from Leuconostoc mesenteroides subsp. mesenteroides (strain ATCC 8293 / DSM 20343 / BCRC 11652 / CCM 1803 / JCM 6124 / NCDO 523 / NBRC 100496 / NCIMB 8023 / NCTC 12954 / NRRL B-1118 / 37Y).